Reading from the N-terminus, the 520-residue chain is Chaperone Ric-8B (520 aa).

Ser468 carries the phosphoserine modification. Thr473 is modified (phosphothreonine).

This sequence belongs to the synembryn family. Interacts with GDP-bound G(s) G-alpha proteins GNAL and GNAS. Does not interact with G-alpha proteins when they are in complex with subunits beta and gamma.

It is found in the cytoplasm. It localises to the cell cortex. Chaperone that specifically binds and folds nascent G(s) G-alpha proteins (GNAS and GNAL) prior to G protein heterotrimer formation, promoting their association with the plasma membrane. Also acts as a guanine nucleotide exchange factor (GEF) for G(s) proteins by stimulating exchange of bound GDP for free GTP. Acts as an important component for odorant signal transduction by mediating GNAL (G(olf)-alpha) folding, thereby promoting-dependent cAMP accumulation in olfactory sensory neurons. In Rattus norvegicus (Rat), this protein is Chaperone Ric-8B (Ric8b).